The chain runs to 59 residues: Large ribosomal subunit protein uL30 (59 aa).

Belongs to the universal ribosomal protein uL30 family. In terms of assembly, part of the 50S ribosomal subunit.

In Stutzerimonas stutzeri (strain A1501) (Pseudomonas stutzeri), this protein is Large ribosomal subunit protein uL30.